Consider the following 349-residue polypeptide: Histidinol-phosphate aminotransferase (349 aa).

Lysine 206 carries the N6-(pyridoxal phosphate)lysine modification.

This sequence belongs to the class-II pyridoxal-phosphate-dependent aminotransferase family. Histidinol-phosphate aminotransferase subfamily. Homodimer. Requires pyridoxal 5'-phosphate as cofactor.

It carries out the reaction L-histidinol phosphate + 2-oxoglutarate = 3-(imidazol-4-yl)-2-oxopropyl phosphate + L-glutamate. It participates in amino-acid biosynthesis; L-histidine biosynthesis; L-histidine from 5-phospho-alpha-D-ribose 1-diphosphate: step 7/9. The polypeptide is Histidinol-phosphate aminotransferase (Streptococcus mutans serotype c (strain ATCC 700610 / UA159)).